Here is a 262-residue protein sequence, read N- to C-terminus: ATP synthase subunit a (262 aa).

5 consecutive transmembrane segments (helical) span residues 24-44 (AVHL…LFVF), 84-104 (VIAP…AIDL), 129-149 (DISA…FYTV), 194-214 (LFGN…MYMA), and 228-248 (LVWA…FMML).

It belongs to the ATPase A chain family. In terms of assembly, F-type ATPases have 2 components, CF(1) - the catalytic core - and CF(0) - the membrane proton channel. CF(1) has five subunits: alpha(3), beta(3), gamma(1), delta(1), epsilon(1). CF(0) has three main subunits: a(1), b(2) and c(9-12). The alpha and beta chains form an alternating ring which encloses part of the gamma chain. CF(1) is attached to CF(0) by a central stalk formed by the gamma and epsilon chains, while a peripheral stalk is formed by the delta and b chains.

The protein resides in the cell inner membrane. Key component of the proton channel; it plays a direct role in the translocation of protons across the membrane. The chain is ATP synthase subunit a from Actinobacillus pleuropneumoniae serotype 3 (strain JL03).